A 146-amino-acid chain; its full sequence is Transcriptional regulator MraZ (146 aa).

SpoVT-AbrB domains are found at residues threonine 6–glutamate 49 and threonine 78–serine 121.

The protein belongs to the MraZ family. Forms oligomers.

It is found in the cytoplasm. Its subcellular location is the nucleoid. This is Transcriptional regulator MraZ from Mesoplasma florum (strain ATCC 33453 / NBRC 100688 / NCTC 11704 / L1) (Acholeplasma florum).